Reading from the N-terminus, the 133-residue chain is DQDCLSGWSFYEGHCYQLFRLKTWDEAEKYCNQWDGGHLVSIESNAKAEFVAQLISRKLPKSAIEDRVWIGLRDRSKREQCGHLWTDNSFVHYEHVVPPTKCFVLERQTEFRKWIAVNCEFKFPFVCKAKIPR.

Disulfide bonds link cysteine 4–cysteine 15, cysteine 31–cysteine 127, and cysteine 102–cysteine 119. Residues 11 to 128 (YEGHCYQLFR…CEFKFPFVCK (118 aa)) form the C-type lectin domain.

The protein belongs to the snaclec family. Heterodimer of subunits alpha and beta; disulfide-linked. Forms an active complex with the pentameric immunoglobuline Mkappa (IgMkappa). In terms of tissue distribution, expressed by the venom gland.

The protein resides in the secreted. Functionally, echicetin itself inhibits aggregation of washed platelets induced by vWF, thrombin or alboaggregin-A. However, when complexed with the pentameric plasma immunoglobulin Mkappa (IgMkappa), echicetin binds specifically to GPIb and activates platelets. This is caused by P-selectin expression and activation of alpha-IIb/beta-3 as well as tyrosine phosphorylation of several signal transduction molecules, including p53/56(LYN), p64, p72(SYK), p70 to p90, and p120. In vivo, it induces thrombocytopenia when injected into mice, probably accounting of activation of platelets rather than inhibition. The chain is Snaclec echicetin subunit alpha from Echis carinatus sochureki (Saw-scaled viper).